We begin with the raw amino-acid sequence, 317 residues long: Glucokinase (317 aa).

This sequence belongs to the ROK (NagC/XylR) family. In terms of assembly, homodimer. It depends on a divalent metal cation as a cofactor.

The catalysed reaction is D-glucose + ATP = D-glucose 6-phosphate + ADP + H(+). Functionally, catalyzes the phosphorylation of D-glucose to D-glucose 6-phosphate using ATP as the phosphate donor. Can also phosphorylate 2-deoxyglucose, with lower efficiency. ITP can also serve as a phosphoryl donor. The chain is Glucokinase from Thermotoga maritima (strain ATCC 43589 / DSM 3109 / JCM 10099 / NBRC 100826 / MSB8).